We begin with the raw amino-acid sequence, 276 residues long: 3-methyl-2-oxobutanoate hydroxymethyltransferase (276 aa).

Mg(2+) is bound by residues Asp-44 and Asp-83. Residues 44–45, Asp-83, and Lys-112 contribute to the 3-methyl-2-oxobutanoate site; that span reads DS. Position 114 (Glu-114) interacts with Mg(2+). Glu-180 serves as the catalytic Proton acceptor. Positions 256 to 276 are disordered; it reads PTEAQSSRMKPDELSRALNAE.

This sequence belongs to the PanB family. As to quaternary structure, homodecamer; pentamer of dimers. Requires Mg(2+) as cofactor.

Its subcellular location is the cytoplasm. The enzyme catalyses 3-methyl-2-oxobutanoate + (6R)-5,10-methylene-5,6,7,8-tetrahydrofolate + H2O = 2-dehydropantoate + (6S)-5,6,7,8-tetrahydrofolate. It functions in the pathway cofactor biosynthesis; (R)-pantothenate biosynthesis; (R)-pantoate from 3-methyl-2-oxobutanoate: step 1/2. Catalyzes the reversible reaction in which hydroxymethyl group from 5,10-methylenetetrahydrofolate is transferred onto alpha-ketoisovalerate to form ketopantoate. This is 3-methyl-2-oxobutanoate hydroxymethyltransferase from Gluconacetobacter diazotrophicus (strain ATCC 49037 / DSM 5601 / CCUG 37298 / CIP 103539 / LMG 7603 / PAl5).